A 96-amino-acid polypeptide reads, in one-letter code: Small ribosomal subunit protein uS19 (96 aa).

The protein belongs to the universal ribosomal protein uS19 family.

Protein S19 forms a complex with S13 that binds strongly to the 16S ribosomal RNA. The protein is Small ribosomal subunit protein uS19 of Koribacter versatilis (strain Ellin345).